The chain runs to 103 residues: SOSS complex subunit C (103 aa).

Belongs to the SOSS-C family. In terms of assembly, belongs to the multiprotein complex Integrator. Component of the SOSS complex, composed of soss-b (soss-b1/nabp2 or soss-b2/nabp1), soss-a/ints3 and soss-c/inip.

It localises to the nucleus. Functionally, component of the SOSS complex, a multiprotein complex that functions downstream of the MRN complex to promote DNA repair and G2/M checkpoint. The SOSS complex associates with single-stranded DNA at DNA lesions and influences diverse endpoints in the cellular DNA damage response including cell-cycle checkpoint activation, recombinational repair and maintenance of genomic stability. Required for efficient homologous recombination-dependent repair of double-strand breaks (DSBs). The sequence is that of SOSS complex subunit C (inip) from Danio rerio (Zebrafish).